The following is a 392-amino-acid chain: Formate-dependent phosphoribosylglycinamide formyltransferase (392 aa).

Residues 22 to 23 (EL) and E82 contribute to the N(1)-(5-phospho-beta-D-ribosyl)glycinamide site. Residues R114, K155, 160 to 165 (SSGKGQ), 195 to 198 (EGVV), and E203 contribute to the ATP site. In terms of domain architecture, ATP-grasp spans 119-308 (RLAAEELQLP…EFALHVRAFL (190 aa)). E267 and E279 together coordinate Mg(2+). N(1)-(5-phospho-beta-D-ribosyl)glycinamide contacts are provided by residues D286, K355, and 362-363 (RR).

Belongs to the PurK/PurT family. Homodimer.

The catalysed reaction is N(1)-(5-phospho-beta-D-ribosyl)glycinamide + formate + ATP = N(2)-formyl-N(1)-(5-phospho-beta-D-ribosyl)glycinamide + ADP + phosphate + H(+). The protein operates within purine metabolism; IMP biosynthesis via de novo pathway; N(2)-formyl-N(1)-(5-phospho-D-ribosyl)glycinamide from N(1)-(5-phospho-D-ribosyl)glycinamide (formate route): step 1/1. Its function is as follows. Involved in the de novo purine biosynthesis. Catalyzes the transfer of formate to 5-phospho-ribosyl-glycinamide (GAR), producing 5-phospho-ribosyl-N-formylglycinamide (FGAR). Formate is provided by PurU via hydrolysis of 10-formyl-tetrahydrofolate. In Klebsiella pneumoniae (strain 342), this protein is Formate-dependent phosphoribosylglycinamide formyltransferase.